The following is a 162-amino-acid chain: Ribonuclease P protein component (162 aa).

Residues 1–67 (MDEKDLAAQP…GGKLVSLKGD (67 aa)) form a disordered region. Residues 21–31 (GPHEDPRRQEG) show a composition bias toward basic and acidic residues.

It belongs to the RnpA family. Consists of a catalytic RNA component (M1 or rnpB) and a protein subunit.

It catalyses the reaction Endonucleolytic cleavage of RNA, removing 5'-extranucleotides from tRNA precursor.. In terms of biological role, RNaseP catalyzes the removal of the 5'-leader sequence from pre-tRNA to produce the mature 5'-terminus. It can also cleave other RNA substrates such as 4.5S RNA. The protein component plays an auxiliary but essential role in vivo by binding to the 5'-leader sequence and broadening the substrate specificity of the ribozyme. The protein is Ribonuclease P protein component of Thermus brockianus.